The sequence spans 432 residues: Adenylosuccinate synthetase (432 aa).

Residues 13 to 19 (GDEGKGK) and 41 to 43 (GHT) each bind GTP. The Proton acceptor role is filled by D14. Residues D14 and G41 each contribute to the Mg(2+) site. Residues 14 to 17 (DEGK), 39 to 42 (NAGH), T130, R144, Q225, T240, and R304 each bind IMP. H42 (proton donor) is an active-site residue. 300-306 (ATTGRRR) serves as a coordination point for substrate. GTP-binding positions include R306, 332–334 (KLD), and 415–417 (STG).

The protein belongs to the adenylosuccinate synthetase family. As to quaternary structure, homodimer. Requires Mg(2+) as cofactor.

Its subcellular location is the cytoplasm. It carries out the reaction IMP + L-aspartate + GTP = N(6)-(1,2-dicarboxyethyl)-AMP + GDP + phosphate + 2 H(+). The protein operates within purine metabolism; AMP biosynthesis via de novo pathway; AMP from IMP: step 1/2. In terms of biological role, plays an important role in the de novo pathway of purine nucleotide biosynthesis. Catalyzes the first committed step in the biosynthesis of AMP from IMP. The sequence is that of Adenylosuccinate synthetase from Citrobacter koseri (strain ATCC BAA-895 / CDC 4225-83 / SGSC4696).